Here is a 176-residue protein sequence, read N- to C-terminus: Calponin-1 (176 aa).

One can recognise a Calponin-homology (CH) domain in the interval 22–125 (PQTERQLRVW…STLIALASQA (104 aa)). The stretch at 158 to 176 (IGLQMGTNKFASQQGMTAY) is one Calponin-like repeat. T164 is modified (phosphothreonine; by ROCK2). S169 carries the phosphoserine; by ROCK2 modification. At T174 the chain carries Phosphothreonine; by ROCK2.

The protein belongs to the calponin family. In terms of tissue distribution, smooth muscle, and tissues containing significant amounts of smooth muscle.

In terms of biological role, thin filament-associated protein that is implicated in the regulation and modulation of smooth muscle contraction. It is capable of binding to actin, calmodulin and tropomyosin. The interaction of calponin with actin inhibits the actomyosin Mg-ATPase activity. This Meleagris gallopavo (Wild turkey) protein is Calponin-1 (CNN1).